Reading from the N-terminus, the 359-residue chain is Protein RecA (359 aa).

An ATP-binding site is contributed by 74–81 (GPESSGKT).

This sequence belongs to the RecA family.

The protein localises to the cytoplasm. In terms of biological role, can catalyze the hydrolysis of ATP in the presence of single-stranded DNA, the ATP-dependent uptake of single-stranded DNA by duplex DNA, and the ATP-dependent hybridization of homologous single-stranded DNAs. It interacts with LexA causing its activation and leading to its autocatalytic cleavage. In Anaplasma marginale (strain Florida), this protein is Protein RecA.